We begin with the raw amino-acid sequence, 480 residues long: 2-phosphoxylose phosphatase 1 (480 aa).

The Cytoplasmic segment spans residues M1 to R6. The chain crosses the membrane as a helical; Signal-anchor for type II membrane protein span at residues F7–F27. The Lumenal portion of the chain corresponds to H28–A480. The Nucleophile role is filled by H97. N194, N305, and N354 each carry an N-linked (GlcNAc...) asparagine glycan. Catalysis depends on D379, which acts as the Proton donor.

The protein belongs to the histidine acid phosphatase family. Interacts with B3GAT3; the interaction increases the 2-phosphoxylose phosphatase activity of PXYLP1 during completion of linkage region formation in a B3GAT3-mediated manner.

The protein localises to the golgi apparatus membrane. The enzyme catalyses 3-O-[beta-D-GlcA-(1-&gt;3)-beta-D-Gal-(1-&gt;3)-beta-D-Gal-(1-&gt;4)-beta-D-2-O-P-Xyl]-L-seryl-[protein] + H2O = 3-O-(beta-D-GlcA-(1-&gt;3)-beta-D-Gal-(1-&gt;3)-beta-D-Gal-(1-&gt;4)-beta-D-Xyl)-L-seryl-[protein] + phosphate. Responsible for the 2-O-dephosphorylation of xylose in the glycosaminoglycan-protein linkage region of proteoglycans thereby regulating the amount of mature glycosaminoglycan (GAG) chains. Sulfated glycosaminoglycans (GAGs), including heparan sulfate and chondroitin sulfate, are synthesized on the so-called common GAG-protein linkage region (GlcUAbeta1-3Galbeta1-3Galbeta1-4Xylbeta1-O-Ser) of core proteins, which is formed by the stepwise addition of monosaccharide residues by the respective specific glycosyltransferases. Xylose 2-O-dephosphorylation during completion of linkage region formation is a prerequisite for the initiation and efficient elongation of the repeating disaccharide region of GAG chains. The sequence is that of 2-phosphoxylose phosphatase 1 from Rattus norvegicus (Rat).